The primary structure comprises 1275 residues: Inner capsid protein lambda-1 (1275 aa).

Positions 1–12 (MKRIPRKTKGKS) are enriched in basic residues. A disordered region spans residues 1-149 (MKRIPRKTKG…DNEGGSNQKP (149 aa)). Composition is skewed to basic and acidic residues over residues 18–35 (DSTERADDGSSQLRDKQN) and 75–117 (NNDE…DKSK). The segment covering 118–149 (AQVTYSDTGINNANELSRSGNVDNEGGSNQKP) has biased composition (polar residues). The C2H2-type zinc finger occupies 181 to 203 (YQCHVCSAVLFSPLDLDAHVASH).

Belongs to the orthoreovirus lambda-1 protein family. In terms of assembly, homodecamer; each decamer is made up of two conformers of VP2, called VP2A and VP2B. 12 homodecamers assemble to form an icosahedral capsid. Interacts with protein mu-NS; in viral inclusions. Mg(2+) serves as cofactor. The cofactor is Mn(2+).

Its subcellular location is the virion. The catalysed reaction is ATP + H2O = ADP + phosphate + H(+). In terms of biological role, inner capsid protein that self-assembles to form an icosahedral capsid with a T=2 symmetry, which consists of 120 copies of VP2, with channels at each of its five-fold vertices. This capsid constitutes the innermost concentric layer of the viral mature particle. Functionally, displays NTPase, RNA 5'-triphosphatase (RTPase) and RNA helicase activities. Helicase activity might be involved in unwinding or reannealing dsRNA during RNA synthesis. RTPase enzymatic activity represents the first step in RNA capping, which yields a 5'-diphosphorylated plus-strand RNA. The protein is Inner capsid protein lambda-1 (L3) of Reovirus type 3 (strain Dearing) (T3D).